We begin with the raw amino-acid sequence, 293 residues long: Probable endonuclease 4 (293 aa).

9 residues coordinate Zn(2+): His-78, His-118, Glu-154, Asp-188, His-191, His-225, Asp-238, His-240, and Glu-270.

Belongs to the AP endonuclease 2 family. Zn(2+) is required as a cofactor.

It carries out the reaction Endonucleolytic cleavage to 5'-phosphooligonucleotide end-products.. In terms of biological role, endonuclease IV plays a role in DNA repair. It cleaves phosphodiester bonds at apurinic or apyrimidinic (AP) sites, generating a 3'-hydroxyl group and a 5'-terminal sugar phosphate. This chain is Probable endonuclease 4, found in Vibrio vulnificus (strain YJ016).